A 183-amino-acid polypeptide reads, in one-letter code: Adenine phosphoribosyltransferase (183 aa).

It belongs to the purine/pyrimidine phosphoribosyltransferase family. In terms of assembly, homodimer.

The protein resides in the cytoplasm. The enzyme catalyses AMP + diphosphate = 5-phospho-alpha-D-ribose 1-diphosphate + adenine. It functions in the pathway purine metabolism; AMP biosynthesis via salvage pathway; AMP from adenine: step 1/1. In terms of biological role, catalyzes a salvage reaction resulting in the formation of AMP, that is energically less costly than de novo synthesis. This is Adenine phosphoribosyltransferase from Salmonella typhi.